The primary structure comprises 425 residues: Aspartic protease 2 (425 aa).

An N-terminal signal peptide occupies residues 1 to 16 (MRSILVLVALIGCIAA). The region spanning 72–421 (YLGEITIGTP…DIEKKRIGFA (350 aa)) is the Peptidase A1 domain. Aspartate 90 is a catalytic residue. Cysteine 103 and cysteine 145 are joined by a disulfide. Asparagine 163, asparagine 197, and asparagine 304 each carry an N-linked (GlcNAc...) asparagine glycan. Residue aspartate 316 is part of the active site. Cysteine 351 and cysteine 382 are joined by a disulfide. 2 N-linked (GlcNAc...) asparagine glycosylation sites follow: asparagine 354 and asparagine 365.

It belongs to the peptidase A1 family. Cleaved into a mature form. As to expression, expressed in intestine, amphidal glands and excretory gland (at protein level).

The protein resides in the secreted. Inhibited by pepstatin A. Functionally, aspartic protease which cleaves several human serum proteins including hemoglobin, fibrinogen and albumin. Appears to cleave preferentially between P1 (Ala, Leu, Val, Phe and Gly) and P1' (Ala and Leu) residues. This is Aspartic protease 2 from Necator americanus (Human hookworm).